Consider the following 382-residue polypeptide: Anhydro-N-acetylmuramic acid kinase (382 aa).

Residue 9–16 (GTSLDGID) coordinates ATP.

It belongs to the anhydro-N-acetylmuramic acid kinase family.

It catalyses the reaction 1,6-anhydro-N-acetyl-beta-muramate + ATP + H2O = N-acetyl-D-muramate 6-phosphate + ADP + H(+). The protein operates within amino-sugar metabolism; 1,6-anhydro-N-acetylmuramate degradation. It functions in the pathway cell wall biogenesis; peptidoglycan recycling. In terms of biological role, catalyzes the specific phosphorylation of 1,6-anhydro-N-acetylmuramic acid (anhMurNAc) with the simultaneous cleavage of the 1,6-anhydro ring, generating MurNAc-6-P. Is required for the utilization of anhMurNAc either imported from the medium or derived from its own cell wall murein, and thus plays a role in cell wall recycling. In Bacillus anthracis (strain A0248), this protein is Anhydro-N-acetylmuramic acid kinase.